The primary structure comprises 243 residues: GTP cyclohydrolase 1 type 2 (243 aa).

A divalent metal cation contacts are provided by histidine 63, histidine 64, aspartate 102, histidine 209, and glutamate 213.

Belongs to the GTP cyclohydrolase I type 2/NIF3 family. Homohexamer.

It catalyses the reaction GTP + H2O = 7,8-dihydroneopterin 3'-triphosphate + formate + H(+). It participates in cofactor biosynthesis; 7,8-dihydroneopterin triphosphate biosynthesis; 7,8-dihydroneopterin triphosphate from GTP: step 1/1. Converts GTP to dihydroneopterin triphosphate. This Helicobacter pylori (strain J99 / ATCC 700824) (Campylobacter pylori J99) protein is GTP cyclohydrolase 1 type 2.